A 319-amino-acid polypeptide reads, in one-letter code: Ribose-phosphate pyrophosphokinase (319 aa).

ATP-binding positions include 40 to 42 and 99 to 100; these read DGE and RQ. The Mg(2+) site is built by histidine 134 and aspartate 174. Lysine 198 is a catalytic residue. Residues arginine 200, aspartate 224, and 228-232 each bind D-ribose 5-phosphate; that span reads DTAGT.

The protein belongs to the ribose-phosphate pyrophosphokinase family. Class I subfamily. Homohexamer. Mg(2+) is required as a cofactor.

Its subcellular location is the cytoplasm. The catalysed reaction is D-ribose 5-phosphate + ATP = 5-phospho-alpha-D-ribose 1-diphosphate + AMP + H(+). It functions in the pathway metabolic intermediate biosynthesis; 5-phospho-alpha-D-ribose 1-diphosphate biosynthesis; 5-phospho-alpha-D-ribose 1-diphosphate from D-ribose 5-phosphate (route I): step 1/1. Involved in the biosynthesis of the central metabolite phospho-alpha-D-ribosyl-1-pyrophosphate (PRPP) via the transfer of pyrophosphoryl group from ATP to 1-hydroxyl of ribose-5-phosphate (Rib-5-P). This chain is Ribose-phosphate pyrophosphokinase, found in Xanthomonas campestris pv. campestris (strain ATCC 33913 / DSM 3586 / NCPPB 528 / LMG 568 / P 25).